A 257-amino-acid polypeptide reads, in one-letter code: Photosystem I chlorophyll a/b-binding protein 2, chloroplastic (257 aa).

A chloroplast-targeting transit peptide spans 1–43 (MASSLCASSAIAAISSPSFLGGKKLRLKKKLTVPAVSRPDASV). Tryptophan 55 contributes to the chlorophyll b binding site. Chlorophyll a is bound by residues phenylalanine 75, serine 81, and glutamate 94. Arginine 99 is a chlorophyll b binding site. The next 2 membrane-spanning stretches (helical) occupy residues 100-120 (WAML…IGIL) and 133-153 (YFTD…WAEG). Glutamate 152 and arginine 155 together coordinate chlorophyll b. Chlorophyll a-binding residues include lysine 208, glutamate 209, asparagine 212, arginine 214, glutamine 226, and histidine 241. A helical membrane pass occupies residues 215–235 (LAMLAVMGAWFQHIYTGTGPI).

The protein belongs to the light-harvesting chlorophyll a/b-binding (LHC) protein family. As to quaternary structure, the LHC complex consists of chlorophyll a-b binding proteins. Red-emitting heterodimers with LHCA3 and LHCA5. Binds to carotenoids. Binds at least 14 chlorophylls (8 Chl-a and 6 Chl-b) and carotenoids such as lutein and neoxanthin. serves as cofactor. In terms of processing, photoregulated by reversible phosphorylation of its threonine residues.

Its subcellular location is the plastid. The protein localises to the chloroplast thylakoid membrane. The light-harvesting complex (LHC) functions as a light receptor, it captures and delivers excitation energy to photosystems with which it is closely associated, here photosystem I. This Arabidopsis thaliana (Mouse-ear cress) protein is Photosystem I chlorophyll a/b-binding protein 2, chloroplastic.